Here is a 196-residue protein sequence, read N- to C-terminus: Small ribosomal subunit protein uS4c (196 aa).

The tract at residues 20–39 is disordered; it reads GLTRKTPKSGSNLKKKFHSG. Residues 89–152 enclose the S4 RNA-binding domain; the sequence is MRLDNILFRL…RSKCLVQNSI (64 aa).

Belongs to the universal ribosomal protein uS4 family. Part of the 30S ribosomal subunit. Contacts protein S5. The interaction surface between S4 and S5 is involved in control of translational fidelity.

It localises to the plastid. The protein localises to the chloroplast. One of the primary rRNA binding proteins, it binds directly to 16S rRNA where it nucleates assembly of the body of the 30S subunit. Its function is as follows. With S5 and S12 plays an important role in translational accuracy. The polypeptide is Small ribosomal subunit protein uS4c (rps4) (Dendrocalamus giganteus (Giant bamboo)).